Consider the following 185-residue polypeptide: Ribosome-recycling factor (185 aa).

It belongs to the RRF family.

The protein resides in the cytoplasm. Functionally, responsible for the release of ribosomes from messenger RNA at the termination of protein biosynthesis. May increase the efficiency of translation by recycling ribosomes from one round of translation to another. The sequence is that of Ribosome-recycling factor from Pseudoalteromonas atlantica (strain T6c / ATCC BAA-1087).